A 200-amino-acid chain; its full sequence is MVLFTLEDFAVFKATTLATRMHLIREQLDPKFAEAATVIVPLLQTDQQAIYSHIAKHQRRYRNPPPNTWVAFSTSSRGYKMVPHLALGFWDDRLFLWLSVLRESKPASRVLTGITAMATTLPGKWQVAGEHTDKAMLPLTSANLATVGARFQTIKKAEFLLGKVYLADDPIWADPVRLWQDIQQRVVALKPMFDQLVQNV.

It belongs to the UPF0637 family.

The protein is UPF0637 protein LCABL_14170 of Lacticaseibacillus casei (strain BL23) (Lactobacillus casei).